Consider the following 242-residue polypeptide: Probable transcriptional regulatory protein Dred_1658 (242 aa).

It belongs to the TACO1 family.

The protein resides in the cytoplasm. The chain is Probable transcriptional regulatory protein Dred_1658 from Desulforamulus reducens (strain ATCC BAA-1160 / DSM 100696 / MI-1) (Desulfotomaculum reducens).